Consider the following 51-residue polypeptide: MFKKGQKVIVDFTDEIGAVAKVDYRYNQIEVKYPDGTYQVVGFHKVRKVED.

In Bacillus subtilis (strain 168), this protein is SPbeta prophage-derived uncharacterized protein YorQ (yorQ).